The chain runs to 135 residues: FK506-binding protein 2 (135 aa).

An N-terminal signal peptide occupies residues 1-20 (MRVPIITTLLTLALTGLSQA). Residues 40-128 (GDTVKMHYRG…IFQTELLEIE (89 aa)) enclose the PPIase FKBP-type domain. The Prevents secretion from ER motif lies at 132 to 135 (KDEL).

The protein belongs to the FKBP-type PPIase family. FKBP2 subfamily.

It localises to the endoplasmic reticulum. It carries out the reaction [protein]-peptidylproline (omega=180) = [protein]-peptidylproline (omega=0). Its activity is regulated as follows. Inhibited by both FK506 and rapamycin. PPIases accelerate the folding of proteins. It catalyzes the cis-trans isomerization of proline imidic peptide bonds in oligopeptides. The protein is FK506-binding protein 2 (fkbB) of Emericella nidulans (strain FGSC A4 / ATCC 38163 / CBS 112.46 / NRRL 194 / M139) (Aspergillus nidulans).